Here is a 471-residue protein sequence, read N- to C-terminus: ATP synthase subunit beta (471 aa).

154–161 lines the ATP pocket; that stretch reads GGAGVGKT.

The protein belongs to the ATPase alpha/beta chains family. F-type ATPases have 2 components, CF(1) - the catalytic core - and CF(0) - the membrane proton channel. CF(1) has five subunits: alpha(3), beta(3), gamma(1), delta(1), epsilon(1). CF(0) has three main subunits: a(1), b(2) and c(9-12). The alpha and beta chains form an alternating ring which encloses part of the gamma chain. CF(1) is attached to CF(0) by a central stalk formed by the gamma and epsilon chains, while a peripheral stalk is formed by the delta and b chains.

It localises to the cell membrane. The enzyme catalyses ATP + H2O + 4 H(+)(in) = ADP + phosphate + 5 H(+)(out). In terms of biological role, produces ATP from ADP in the presence of a proton gradient across the membrane. The catalytic sites are hosted primarily by the beta subunits. This is ATP synthase subunit beta from Mesomycoplasma hyopneumoniae (strain 7448) (Mycoplasma hyopneumoniae).